The following is a 141-amino-acid chain: HTH-type transcriptional repressor NsrR (141 aa).

The HTH rrf2-type domain occupies 2–129 (QLTSFTDYGL…DSHTLADMVE (128 aa)). The H-T-H motif DNA-binding region spans 28–51 (ISEVTEVYGVSRNHMVKIINQLSR). [2Fe-2S] cluster contacts are provided by Cys-91, Cys-96, and Cys-102.

[2Fe-2S] cluster is required as a cofactor.

Its function is as follows. Nitric oxide-sensitive repressor of genes involved in protecting the cell against nitrosative stress. May require iron for activity. The polypeptide is HTH-type transcriptional repressor NsrR (Serratia proteamaculans (strain 568)).